Consider the following 2240-residue polypeptide: Death-inducer obliterator 1 (2240 aa).

Met-1 carries the N-acetylmethionine modification. Basic and acidic residues predominate over residues 1–25 (MDDKGDPSNEEAPKAIKPTSKEFRK). The disordered stretch occupies residues 1–259 (MDDKGDPSNE…EPGDLGRPKP (259 aa)). A phosphoserine mark is found at Ser-60 and Ser-114. Polar residues predominate over residues 111–130 (SEGSVESASETRSGPQSAST). Residues 132–146 (VKERPASSEKVKGGD) are compositionally biased toward basic and acidic residues. Positions 147–156 (DHDDTSDSDS) are enriched in acidic residues. Thr-151 is modified (phosphothreonine). A phosphoserine mark is found at Ser-152 and Ser-154. Short sequence motifs (nuclear localization signal) lie at residues 165–173 (QNRLRRKRE) and 185–193 (QSRLRKKRR). Residues 172-181 (REQEPTERPL) show a composition bias toward basic and acidic residues. Residues 230–246 (GKDDRESKLEGKAAQDI) show a composition bias toward basic and acidic residues. Residue Lys-247 forms a Glycyl lysine isopeptide (Lys-Gly) (interchain with G-Cter in SUMO2) linkage. The segment at 268–322 (ALYCICRQPHNNRFMICCDRCEEWFHGDCVGISEARGRLLERNGEDYICPNCTIL) adopts a PHD-type zinc-finger fold. Disordered regions lie at residues 431–456 (SGKEQKPKPKEKMKMKPEKPSLPKCG), 501–567 (STPS…RNLV), 584–618 (KKPPSGFKGTIPKRPWLSATPSSGASAARQAGPAP), 773–826 (RPAR…EKST), 860–947 (VPSA…EDLS), 1013–1045 (LAKPSSSPDPRYLSVPPSPNISTSESRSPPEGD), 1206–1427 (GELD…VAYD), 1453–1472 (RRNSVERPAEPVAGAATPSL), and 1517–2240 (SDAL…ASQA). Residues 433–451 (KEQKPKPKEKMKMKPEKPS) show a composition bias toward basic and acidic residues. Positions 501–510 (STPSWASDHN) are enriched in polar residues. Position 523 is a phosphoserine (Ser-523). Basic and acidic residues predominate over residues 530–541 (STKEDRRSEEKA). Composition is skewed to low complexity over residues 542 to 551 (AAMAASKKTA) and 604 to 618 (PSSGASAARQAGPAP). Positions 670–790 (IRQNIRRSLK…SRTKLHNESK (121 aa)) constitute a TFIIS central domain. Basic and acidic residues predominate over residues 773–791 (RPARSVMESRTKLHNESKK). Acidic residues predominate over residues 800-815 (PDLEDSPPVSDSEEQQ). Ser-805 and Ser-809 each carry phosphoserine. A compositionally biased stretch (basic and acidic residues) spans 878–890 (VKKEDLKSKHDSS). Lys-879 participates in a covalent cross-link: Glycyl lysine isopeptide (Lys-Gly) (interchain with G-Cter in SUMO2). Residues Ser-889 and Ser-898 each carry the phosphoserine modification. Over residues 930-941 (PGPPGDGHPEPS) the composition is skewed to pro residues. Residues Ser-1019, Ser-1030, and Ser-1040 each carry the phosphoserine modification. Over residues 1207–1220 (ELDKMDEKRTRLQP) the composition is skewed to basic and acidic residues. Position 1244 is a phosphotyrosine (Tyr-1244). Thr-1256 bears the Phosphothreonine mark. Residues 1258-1271 (PGSPPPPPPLPEPP) show a composition bias toward pro residues. Phosphoserine is present on residues Ser-1260 and Ser-1312. Positions 1276-1313 (LSSLKPAAPSPATAATTAAAASTAASSTASSASKTASP) are enriched in low complexity. Residues 1376-1392 (LEEEEDDRPYDPEEEYD) show a composition bias toward acidic residues. Residues 1393-1424 (PERAFDTQLVERGRRHEVERAPEAAAAEREEV) are compositionally biased toward basic and acidic residues. Ser-1456 carries the post-translational modification Phosphoserine. At Thr-1469 the chain carries Phosphothreonine. Ser-1522 and Ser-1714 each carry phosphoserine. A compositionally biased stretch (pro residues) spans 1771–1782 (FPGPRGPAPPFP). At Arg-1835 the chain carries Omega-N-methylarginine. Residues 1842 to 1856 (FEERKDPHGEKREFQ) are compositionally biased toward basic and acidic residues. Asymmetric dimethylarginine is present on residues Arg-1893, Arg-1894, Arg-1977, Arg-1982, Arg-1993, Arg-2008, and Arg-2024. Over residues 2044-2059 (AGPPSALSSSAPGQGP) the composition is skewed to low complexity. Composition is skewed to basic and acidic residues over residues 2069–2101 (DFREGKGHEYRNQTFEGRQRERFDVGPKEKPLE) and 2109–2230 (ASED…EASR).

In terms of assembly, interacts specifically (via PHD-type zinc finger) with histone H3 that is trimethylated at 'Lys-4' (H3K4me3), histone phosphorylation at 'Thr-3' or 'Thr-6' disrupts this binding and promotes translocation of DIDO1 from chromatin to the mitotic spindle during mitosis. As to expression, ubiquitous.

The protein localises to the cytoplasm. Its subcellular location is the nucleus. It is found in the cytoskeleton. It localises to the spindle. Functionally, putative transcription factor, weakly pro-apoptotic when overexpressed. Tumor suppressor. Required for early embryonic stem cell development. Displaces isoform 4 at the onset of differentiation, required for repression of stemness genes. The sequence is that of Death-inducer obliterator 1 (DIDO1) from Homo sapiens (Human).